A 194-amino-acid polypeptide reads, in one-letter code: Fe/S biogenesis protein NfuA (194 aa).

2 residues coordinate [4Fe-4S] cluster: C151 and C154.

The protein belongs to the NfuA family. In terms of assembly, homodimer. [4Fe-4S] cluster is required as a cofactor.

In terms of biological role, involved in iron-sulfur cluster biogenesis. Binds a 4Fe-4S cluster, can transfer this cluster to apoproteins, and thereby intervenes in the maturation of Fe/S proteins. Could also act as a scaffold/chaperone for damaged Fe/S proteins. In Photobacterium profundum (strain SS9), this protein is Fe/S biogenesis protein NfuA.